We begin with the raw amino-acid sequence, 105 residues long: uncharacterized protein (105 aa).

Residues 31–47 (SVNLPSPSVKPSVTPSV) are compositionally biased toward low complexity. The segment at 31 to 80 (SVNLPSPSVKPSVTPSVKKPPHVIRSDYSKPREKPAKVAKKPTVKNDKKP) is disordered. Positions 54-66 (IRSDYSKPREKPA) are enriched in basic and acidic residues.

This is an uncharacterized protein from Caenorhabditis elegans.